We begin with the raw amino-acid sequence, 601 residues long: Ubiquitin carboxyl-terminal hydrolase MINDY-2 (601 aa).

The segment at 1–205 is disordered; it reads MENSPDSPQP…LCKEEEEDPA (205 aa). A compositionally biased stretch (basic and acidic residues) spans 24–34; that stretch reads EGRRRGGREAE. Thr62 carries the phosphothreonine modification. Residue Ser82 is modified to Phosphoserine. 3 stretches are compositionally biased toward low complexity: residues 127–141, 148–169, and 186–195; these read EEPS…SCSE, SPSL…SSEF, and GAAGPPRAAP. Cys244 acts as the Nucleophile in catalysis. His426 acts as the Proton acceptor in catalysis. A ubiquitin-binding domain (UBD) region spans residues 485–537; it reads GQQDQIDQDYLMALSLQQEQQSQEINWEQIPEGISDLELAKKLQEEEDRRASQ. The interval 534-601 is disordered; the sequence is RASQYYQEQE…EKEKNSCVIL (68 aa). Low complexity predominate over residues 536 to 570; the sequence is SQYYQEQEQAQAVVTTTTPSTQAQQGQPAQASPSS. The span at 577 to 601 shows a compositional bias: basic and acidic residues; sequence SERKRKEPREKDKEKEKEKNSCVIL.

It belongs to the MINDY deubiquitinase family. FAM63 subfamily.

The catalysed reaction is Thiol-dependent hydrolysis of ester, thioester, amide, peptide and isopeptide bonds formed by the C-terminal Gly of ubiquitin (a 76-residue protein attached to proteins as an intracellular targeting signal).. In terms of biological role, hydrolase that can remove 'Lys-48'-linked conjugated ubiquitin from proteins. Can also bind to polyubiquitin chains of different linkage types, including 'Lys-6', 'Lys-11', 'Lys-29', 'Lys-33' and 'Lys-63'. May play a regulatory role at the level of protein turnover. The sequence is that of Ubiquitin carboxyl-terminal hydrolase MINDY-2 (Mindy2) from Mus musculus (Mouse).